The following is a 316-amino-acid chain: Ribonuclease Z (316 aa).

Residues His61, His63, Asp65, His66, His152, Asp220, and His279 each contribute to the Zn(2+) site. The active-site Proton acceptor is the Asp65.

It belongs to the RNase Z family. In terms of assembly, homodimer. Zn(2+) is required as a cofactor.

It catalyses the reaction Endonucleolytic cleavage of RNA, removing extra 3' nucleotides from tRNA precursor, generating 3' termini of tRNAs. A 3'-hydroxy group is left at the tRNA terminus and a 5'-phosphoryl group is left at the trailer molecule.. Functionally, zinc phosphodiesterase, which displays some tRNA 3'-processing endonuclease activity. Probably involved in tRNA maturation, by removing a 3'-trailer from precursor tRNA. This is Ribonuclease Z from Clostridium perfringens (strain ATCC 13124 / DSM 756 / JCM 1290 / NCIMB 6125 / NCTC 8237 / Type A).